Consider the following 340-residue polypeptide: Ketol-acid reductoisomerase (NADP(+)) (340 aa).

The KARI N-terminal Rossmann domain maps to 5 to 182; the sequence is MEYEKDVKVA…GSARVGLLET (178 aa). Residues 26–29, Arg-49, Ser-53, and 83–86 contribute to the NADP(+) site; these read YGSQ and DEIQ. Residue His-108 is part of the active site. Gly-134 is a binding site for NADP(+). The KARI C-terminal knotted domain maps to 183-328; the sequence is TYKEETEEDL…AELRKAMPFV (146 aa). The Mg(2+) site is built by Asp-191, Glu-195, Glu-227, and Glu-231. Ser-252 is a substrate binding site.

Belongs to the ketol-acid reductoisomerase family. The cofactor is Mg(2+).

The enzyme catalyses (2R)-2,3-dihydroxy-3-methylbutanoate + NADP(+) = (2S)-2-acetolactate + NADPH + H(+). It carries out the reaction (2R,3R)-2,3-dihydroxy-3-methylpentanoate + NADP(+) = (S)-2-ethyl-2-hydroxy-3-oxobutanoate + NADPH + H(+). The protein operates within amino-acid biosynthesis; L-isoleucine biosynthesis; L-isoleucine from 2-oxobutanoate: step 2/4. Its pathway is amino-acid biosynthesis; L-valine biosynthesis; L-valine from pyruvate: step 2/4. Functionally, involved in the biosynthesis of branched-chain amino acids (BCAA). Catalyzes an alkyl-migration followed by a ketol-acid reduction of (S)-2-acetolactate (S2AL) to yield (R)-2,3-dihydroxy-isovalerate. In the isomerase reaction, S2AL is rearranged via a Mg-dependent methyl migration to produce 3-hydroxy-3-methyl-2-ketobutyrate (HMKB). In the reductase reaction, this 2-ketoacid undergoes a metal-dependent reduction by NADPH to yield (R)-2,3-dihydroxy-isovalerate. This is Ketol-acid reductoisomerase (NADP(+)) from Streptococcus sanguinis (strain SK36).